Here is a 376-residue protein sequence, read N- to C-terminus: 3-aminomethylindole N-methyltransferase (376 aa).

Residues G220, D243, D263, and M264 each coordinate S-adenosyl-L-homocysteine.

Belongs to the class I-like SAM-binding methyltransferase superfamily. Cation-independent O-methyltransferase family. More present in the fifth leaf than in the second leaf (at protein level).

It carries out the reaction 3-(aminomethyl)indole + 2 S-adenosyl-L-methionine = gramine + 2 S-adenosyl-L-homocysteine + 2 H(+). Its pathway is alkaloid biosynthesis. With respect to regulation, repressed by sodium carbonate, sodium bicarbonate and K-phosphate. Functionally, methylates 3-aminomethylindole (AMI) and N-methyl-3-aminomethylindole (MAMI), two substrates involved in gramine biosynthesis, a toxic indole alkaloid. Can use S-adenosyl-L-methionine (AdoMet) as a methyl donor. Unable to mediate caffeic acid O-methylation. This Hordeum vulgare subsp. vulgare (Domesticated barley) protein is 3-aminomethylindole N-methyltransferase.